Reading from the N-terminus, the 82-residue chain is Phosphoribosylformylglycinamidine synthase subunit PurS (82 aa).

It belongs to the PurS family. Homodimer. Part of the FGAM synthase complex composed of 1 PurL, 1 PurQ and 2 PurS subunits.

The protein resides in the cytoplasm. The catalysed reaction is N(2)-formyl-N(1)-(5-phospho-beta-D-ribosyl)glycinamide + L-glutamine + ATP + H2O = 2-formamido-N(1)-(5-O-phospho-beta-D-ribosyl)acetamidine + L-glutamate + ADP + phosphate + H(+). It functions in the pathway purine metabolism; IMP biosynthesis via de novo pathway; 5-amino-1-(5-phospho-D-ribosyl)imidazole from N(2)-formyl-N(1)-(5-phospho-D-ribosyl)glycinamide: step 1/2. Part of the phosphoribosylformylglycinamidine synthase complex involved in the purines biosynthetic pathway. Catalyzes the ATP-dependent conversion of formylglycinamide ribonucleotide (FGAR) and glutamine to yield formylglycinamidine ribonucleotide (FGAM) and glutamate. The FGAM synthase complex is composed of three subunits. PurQ produces an ammonia molecule by converting glutamine to glutamate. PurL transfers the ammonia molecule to FGAR to form FGAM in an ATP-dependent manner. PurS interacts with PurQ and PurL and is thought to assist in the transfer of the ammonia molecule from PurQ to PurL. This chain is Phosphoribosylformylglycinamidine synthase subunit PurS, found in Thermotoga maritima (strain ATCC 43589 / DSM 3109 / JCM 10099 / NBRC 100826 / MSB8).